A 449-amino-acid chain; its full sequence is Protein translocase subunit SecD (449 aa).

The next 6 membrane-spanning stretches (helical) occupy residues 6–26, 272–292, 294–314, 317–337, 379–399, and 401–421; these read GLVF…VLPT, LAVK…IAFY, LPGL…LALF, VPVT…GMAV, TFIA…GAPV, and GFAV…IFVT.

It belongs to the SecD/SecF family. SecD subfamily. Forms a complex with SecF. Part of the essential Sec protein translocation apparatus which comprises SecA, SecYEG and auxiliary proteins SecDF. Other proteins may also be involved.

The protein localises to the cell membrane. In terms of biological role, part of the Sec protein translocase complex. Interacts with the SecYEG preprotein conducting channel. SecDF uses the proton motive force (PMF) to complete protein translocation after the ATP-dependent function of SecA. This is Protein translocase subunit SecD from Dehalococcoides mccartyi (strain VS).